The sequence spans 191 residues: Thymidine kinase (191 aa).

ATP is bound by residues 15 to 22 (GSMFSGKS) and 88 to 91 (DEVQ). Catalysis depends on glutamate 89, which acts as the Proton acceptor. Residues cysteine 145, cysteine 148, cysteine 183, and histidine 186 each contribute to the Zn(2+) site.

It belongs to the thymidine kinase family. In terms of assembly, homotetramer.

Its subcellular location is the cytoplasm. It catalyses the reaction thymidine + ATP = dTMP + ADP + H(+). The protein is Thymidine kinase of Macrococcus caseolyticus (strain JCSC5402) (Macrococcoides caseolyticum).